A 464-amino-acid chain; its full sequence is Calcitonin gene-related peptide type 1 receptor (464 aa).

The first 23 residues, 1 to 23 (MMDKKCTLCFLFLLLLNMALIAA), serve as a signal peptide directing secretion. The Extracellular segment spans residues 24-139 (ESEEGANQTD…STHEKVKTAL (116 aa)). N-linked (GlcNAc...) asparagine glycans are attached at residues asparagine 30, asparagine 66, asparagine 118, asparagine 123, asparagine 128, and asparagine 129. Intrachain disulfides connect cysteine 48–cysteine 74, cysteine 65–cysteine 105, and cysteine 88–cysteine 127. The chain crosses the membrane as a helical span at residues 140-164 (NLFYLTIIGHGLSIASLIISLIIFF). Residues 165–175 (YFKSLSCQRIT) lie on the Cytoplasmic side of the membrane. A helical membrane pass occupies residues 176 to 198 (LHKNLFFSFVCNSIVTIIHLTAV). The Extracellular portion of the chain corresponds to 199 to 209 (ANNQALVATNP). A helical transmembrane segment spans residues 210–238 (VSCKVSQFIHLYLMGCNYFWMLCEGIYLH). Residues 239–252 (TLIVVAVFAEKQHL) are Cytoplasmic-facing. Residues 253–273 (MWYYFLGWGFPLLPACIHAIA) traverse the membrane as a helical segment. The Extracellular portion of the chain corresponds to 274 to 289 (RSLYYNDNCWISSDTH). Positions 288–289 (TH) are required for RAMP3 interaction. The helical transmembrane segment at 290-314 (LLYIIHGPICAALLVNLFFLLNIVR) threads the bilayer. Residues 315 to 329 (VLITKLKVTHQAESN) are Cytoplasmic-facing. The helical transmembrane segment at 330–351 (LYMKAVRATLILVPLLGIEFVL) threads the bilayer. The Extracellular portion of the chain corresponds to 352 to 366 (FPWRPEGKVAEEVYD). A helical transmembrane segment spans residues 367–387 (YVMHILMHYQGLLVSTIFCFF). Topologically, residues 388–464 (NGEVQAILRR…KPEKMYDLVM (77 aa)) are cytoplasmic. Phosphoserine is present on residues serine 420 and serine 445.

The protein belongs to the G-protein coupled receptor 2 family. In terms of assembly, heterodimer of CALCRL and RAMP1; the receptor complex functions as CGRP receptor. Heterodimer of CALCRL and RAMP2 or CALCRL and RAMP3; the complexes function as adrenomedullin receptor.

It is found in the cell membrane. Functionally, g protein-coupled receptor which specificity is determined by its interaction with receptor-activity-modifying proteins (RAMPs). Together with RAMP1, form the receptor complex for calcitonin-gene-related peptides CALCA/CGRP1 and CALCB/CGRP2. Together with RAMP2 or RAMP3, function as receptor complexes for adrenomedullin (ADM and ADM2). Ligand binding causes a conformation change that triggers signaling via guanine nucleotide-binding proteins (G proteins) and modulates the activity of downstream effectors. Activates cAMP-dependent pathway. This Rattus norvegicus (Rat) protein is Calcitonin gene-related peptide type 1 receptor.